A 171-amino-acid polypeptide reads, in one-letter code: Nicotinamide-nucleotide adenylyltransferase (171 aa).

The protein belongs to the archaeal NMN adenylyltransferase family.

The protein resides in the cytoplasm. It catalyses the reaction beta-nicotinamide D-ribonucleotide + ATP + H(+) = diphosphate + NAD(+). Its pathway is cofactor biosynthesis; NAD(+) biosynthesis; NAD(+) from nicotinamide D-ribonucleotide: step 1/1. In Methanococcus maripaludis (strain C6 / ATCC BAA-1332), this protein is Nicotinamide-nucleotide adenylyltransferase.